The sequence spans 86 residues: Small ribosomal subunit protein uS15c (86 aa).

Belongs to the universal ribosomal protein uS15 family. As to quaternary structure, part of the 30S ribosomal subunit.

It localises to the plastid. The sequence is that of Small ribosomal subunit protein uS15c (rps15) from Cuscuta obtusiflora (Peruvian dodder).